The following is a 485-amino-acid chain: DNA polymerase subunit gamma-2 (485 aa).

The interval Arg-28–Glu-67 is disordered.

As to quaternary structure, heterotrimer composed of a catalytic subunit and a homodimer of accessory subunits (POLG:POLG2).

The protein resides in the mitochondrion. Its subcellular location is the mitochondrion matrix. It is found in the mitochondrion nucleoid. Accessory subunit of DNA polymerase gamma solely responsible for replication of mitochondrial DNA (mtDNA). Acts as an allosteric regulator of the holoenzyme activities. Enhances the polymerase activity and the processivity of POLG by increasing its interactions with the DNA template. Suppresses POLG exonucleolytic proofreading especially toward homopolymeric templates bearing mismatched termini. Binds to single-stranded DNA. In Bos taurus (Bovine), this protein is DNA polymerase subunit gamma-2 (POLG2).